Consider the following 357-residue polypeptide: Chorismate synthase (357 aa).

Arg46 serves as a coordination point for NADP(+). Residues 123–125 (RSS), 235–236 (NA), Gly275, 290–294 (KPTPS), and Arg316 each bind FMN.

Belongs to the chorismate synthase family. In terms of assembly, homotetramer. The cofactor is FMNH2.

It catalyses the reaction 5-O-(1-carboxyvinyl)-3-phosphoshikimate = chorismate + phosphate. The protein operates within metabolic intermediate biosynthesis; chorismate biosynthesis; chorismate from D-erythrose 4-phosphate and phosphoenolpyruvate: step 7/7. Functionally, catalyzes the anti-1,4-elimination of the C-3 phosphate and the C-6 proR hydrogen from 5-enolpyruvylshikimate-3-phosphate (EPSP) to yield chorismate, which is the branch point compound that serves as the starting substrate for the three terminal pathways of aromatic amino acid biosynthesis. This reaction introduces a second double bond into the aromatic ring system. This is Chorismate synthase from Sulfurovum sp. (strain NBC37-1).